Consider the following 903-residue polypeptide: Glutamate receptor ionotropic, NMDA 1 (903 aa).

The N-terminal stretch at 1–20 is a signal peptide; it reads MGTMRLFLLAVLFLFSFARA. Over 21 to 557 the chain is Extracellular; sequence GCDPKIVNIG…TLDSFMQPFQ (537 aa). N-linked (GlcNAc...) asparagine glycans are attached at residues Asn61, Asn203, Asn276, Asn300, Asn350, Asn368, Asn440, Asn469, and Asn489. A disulfide bridge links Cys79 with Cys308. Cystine bridges form between Cys420–Cys452 and Cys436–Cys453. Residues Pro514, Thr516, and Arg521 each contribute to the glycine site. A helical transmembrane segment spans residues 558–578; it reads STLWLLVGLSVHVVAVMLYLL. The Cytoplasmic portion of the chain corresponds to 579 to 600; the sequence is DRFSPFGRFKVNSEEEEEDALT. Positions 601–620 are pore-forming; the sequence is LSSAMWFSWGVLLNSGIGEG. Residues 601-622 constitute an intramembrane region (discontinuously helical); the sequence is LSSAMWFSWGVLLNSGIGEGAP. The Cytoplasmic segment spans residues 623 to 628; sequence RSFSAR. The helical transmembrane segment at 629-645 threads the bilayer; sequence ILGMVWAGFAMIIVASY. At 646–810 the chain is on the extracellular side; that stretch reads TANLAAFLVL…NAPATLTFEN (165 aa). 2 residues coordinate glycine: Ser686 and Asp730. The cysteines at positions 742 and 796 are disulfide-linked. The N-linked (GlcNAc...) asparagine glycan is linked to Asn769. Residues 811–831 form a helical membrane-spanning segment; the sequence is MAGVFMLVAGGIVAGIFLIFI. Over 832–903 the chain is Cytoplasmic; that stretch reads EIAYKRHKDA…SSKDTVNVVV (72 aa).

This sequence belongs to the glutamate-gated ion channel (TC 1.A.10.1) family. NR1/GRIN1 subfamily. Heterotetramer; the NMDAR subunits are modular and harbor tiered domains that function in concert to regulate opening and closing of the cation-selective ion channel pore. Forms heterotetrameric channels composed of two GluN1/zeta subunits (GRIN1), and two identical GluN2/epsilon subunits (GRIN2A, GRIN2B, GRIN2C or GRIN2D) or GluN3 subunits (GRIN3A or GRIN3B) (in vitro). Does not form functional channels by itself. Can also form heterotetrameric channels that contain at least two GluN1 subunits and at least two different GluN2 subunits (or a combination of one GluN2 and one GluN3 subunits) (in vitro). In vivo, the subunit composition may vary in function of the expression levels of the different subunits.

It localises to the cell membrane. Its subcellular location is the postsynaptic cell membrane. It is found in the postsynaptic density membrane. The protein resides in the synaptic cell membrane. The enzyme catalyses Ca(2+)(in) = Ca(2+)(out). The catalysed reaction is Na(+)(in) = Na(+)(out). It catalyses the reaction K(+)(in) = K(+)(out). Its activity is regulated as follows. NMDA glutamate receptor activity is modulated by zinc ions. The NMDA glutamate receptor activity of the heterotetramer with grin2b is stimulated by micromolar levels of Zn(2+). The NMDA glutamate receptor activity of the heterotetramer with grin2a is inhibited by nanomolar levels of Zn(2+). Functionally, component of N-methyl-D-aspartate (NMDA) receptors (NMDARs) that function as heterotetrameric, ligand-gated cation channels with high calcium permeability and voltage-dependent block by Mg(2+). NMDARs participate in synaptic plasticity. Channel activation requires binding of the neurotransmitter L-glutamate to the GluN2 subunit, glycine binding to the GluN1 subunit, plus membrane depolarization to eliminate channel inhibition by Mg(2+). NMDARs mediate simultaneously the potasium efflux and the influx of calcium and sodium. Each GluN2 or GluN3 subunit confers differential attributes to channel properties, including activation, deactivation and desensitization kinetics, pH sensitivity, Ca2(+) permeability, and binding to allosteric modulators. The sequence is that of Glutamate receptor ionotropic, NMDA 1 from Xenopus laevis (African clawed frog).